Consider the following 101-residue polypeptide: Ubiquitin-related modifier 1 (101 aa).

Gly101 is subject to 1-thioglycine. A Glycyl lysine isopeptide (Gly-Lys) (interchain with K-? in acceptor proteins) cross-link involves residue Gly101.

Belongs to the URM1 family. Component of a complex at least composed of URM1, CTU2/NCS2 and CTU1/ATPBD3. Post-translationally, C-terminal thiocarboxylation occurs in 2 steps, it is first acyl-adenylated (-COAMP) via the hesA/moeB/thiF part of MOCS3, then thiocarboxylated (-COSH) via the rhodanese domain of MOCS3.

Its subcellular location is the cytoplasm. Its pathway is tRNA modification; 5-methoxycarbonylmethyl-2-thiouridine-tRNA biosynthesis. Functionally, acts as a sulfur carrier required for 2-thiolation of mcm(5)S(2)U at tRNA wobble positions of cytosolic tRNA(Lys), tRNA(Glu) and tRNA(Gln). Serves as sulfur donor in tRNA 2-thiolation reaction by being thiocarboxylated (-COSH) at its C-terminus by MOCS3. The sulfur is then transferred to tRNA to form 2-thiolation of mcm(5)S(2)U. Also acts as a ubiquitin-like protein (UBL) that is covalently conjugated via an isopeptide bond to lysine residues of target proteins such as MOCS3, ATPBD3, CTU2, USP15 and CAS. The thiocarboxylated form serves as substrate for conjugation and oxidative stress specifically induces the formation of UBL-protein conjugates. This Homo sapiens (Human) protein is Ubiquitin-related modifier 1.